We begin with the raw amino-acid sequence, 116 residues long: Integration host factor subunit alpha (116 aa).

2 disordered regions span residues 58–80 (FGNFQVRDKPPRPGRNPKTGETI) and 94–116 (QKLKSTVEQSGNPAEVSDDEAAE). Over residues 94–105 (QKLKSTVEQSGN) the composition is skewed to polar residues.

The protein belongs to the bacterial histone-like protein family. Heterodimer of an alpha and a beta chain.

Its function is as follows. This protein is one of the two subunits of integration host factor, a specific DNA-binding protein that functions in genetic recombination as well as in transcriptional and translational control. The sequence is that of Integration host factor subunit alpha from Bordetella avium (strain 197N).